The primary structure comprises 341 residues: Phospholipid phosphatase homolog 1.2 homolog (341 aa).

3 helical membrane passes run 30–50 (LFIF…LLGV), 71–91 (ITAV…VLFV), and 122–142 (LLTY…LNIV). N-linked (GlcNAc...) asparagine glycosylation occurs at N162. Transmembrane regions (helical) follow at residues 223–243 (RIVV…ISFS) and 257–277 (VGIF…TDLF). Disordered stretches follow at residues 284 to 308 (SETQ…ERHR) and 322 to 341 (FEAT…PQSA). Positions 299–308 (RNSEDEERHR) are enriched in basic and acidic residues.

It belongs to the PA-phosphatase related phosphoesterase family.

It is found in the membrane. The chain is Phospholipid phosphatase homolog 1.2 homolog from Caenorhabditis elegans.